The primary structure comprises 71 residues: Cell division protein FtsB (71 aa).

The Cytoplasmic portion of the chain corresponds to 1–3 (MKI). Residues 4-21 (LKIFLLSLLFWLQYSLWF) traverse the membrane as a helical segment. Residues 22 to 71 (GKNGVLDFIKIYRRVTIEKKNNEYLDMRNNQIILEIENFNNHINKDKKKT) are Extracellular-facing.

Belongs to the FtsB family.

The protein localises to the cell membrane. Its function is as follows. Essential cell division protein. May link together the upstream cell division proteins, which are predominantly cytoplasmic, with the downstream cell division proteins, which are predominantly extracellular. The sequence is that of Cell division protein FtsB from Buchnera aphidicola subsp. Acyrthosiphon pisum (strain APS) (Acyrthosiphon pisum symbiotic bacterium).